The primary structure comprises 233 residues: 2,3-bisphosphoglycerate-dependent phosphoglycerate mutase (233 aa).

Substrate-binding positions include 8-15 (RHGQSLWN), 21-22 (TG), R60, 116-119 (ERYY), K127, 143-144 (RR), and 187-188 (GN). H9 (tele-phosphohistidine intermediate) is an active-site residue. The Proton donor/acceptor role is filled by E116.

Belongs to the phosphoglycerate mutase family. BPG-dependent PGAM subfamily.

It carries out the reaction (2R)-2-phosphoglycerate = (2R)-3-phosphoglycerate. The protein operates within carbohydrate degradation; glycolysis; pyruvate from D-glyceraldehyde 3-phosphate: step 3/5. Catalyzes the interconversion of 2-phosphoglycerate and 3-phosphoglycerate. This Gloeothece citriformis (strain PCC 7424) (Cyanothece sp. (strain PCC 7424)) protein is 2,3-bisphosphoglycerate-dependent phosphoglycerate mutase.